The primary structure comprises 418 residues: Homocitrate synthase, mitochondrial (418 aa).

Positions 1-10 are enriched in polar residues; the sequence is MSVSEANGTE. The interval 1–25 is disordered; the sequence is MSVSEANGTETIKPPMNGNPYGPNP. Over residues 14 to 25 the composition is skewed to low complexity; sequence PPMNGNPYGPNP. The 254-residue stretch at 35 to 288 folds into the Pyruvate carboxyltransferase domain; the sequence is FSIIESTLRE…THKYKLNQLR (254 aa). 3 residues coordinate 2-oxoglutarate: Arg43, Glu44, and His103. L-lysine is bound at residue Glu44. Position 44 (Glu44) interacts with Zn(2+). Asp123 contributes to the L-lysine binding site. Positions 163, 165, 197, 224, and 226 each coordinate 2-oxoglutarate. Position 197 (Thr197) interacts with L-lysine. Positions 224 and 226 each coordinate Zn(2+). The active-site Proton acceptor is His321.

The protein belongs to the alpha-IPM synthase/homocitrate synthase family. Homocitrate synthase LYS20/LYS21 subfamily. The cofactor is Mg(2+). Mn(2+) is required as a cofactor. Requires Zn(2+) as cofactor. Co(2+) serves as cofactor.

The protein localises to the mitochondrion. It carries out the reaction acetyl-CoA + 2-oxoglutarate + H2O = (2R)-homocitrate + CoA + H(+). The protein operates within amino-acid biosynthesis; L-lysine biosynthesis via AAA pathway; L-alpha-aminoadipate from 2-oxoglutarate: step 1/5. With respect to regulation, the activity is controled by feedback inhibition by L-lysine, the final product of the pathway that acts as a competitive inhibitor of 2-oxoglutarate. Catalyzes the aldol-type condensation of 2-oxoglutarate with acetyl-CoA to yield homocitrate, the first step of the alpha-aminoadipate (AAA) lysine biosynthesis pathway. The protein is Homocitrate synthase, mitochondrial of Schizosaccharomyces pombe (strain 972 / ATCC 24843) (Fission yeast).